The primary structure comprises 355 residues: Probable butyrate kinase (355 aa).

The protein belongs to the acetokinase family.

The protein localises to the cytoplasm. The enzyme catalyses butanoate + ATP = butanoyl phosphate + ADP. The polypeptide is Probable butyrate kinase (Listeria monocytogenes serovar 1/2a (strain ATCC BAA-679 / EGD-e)).